The following is a 179-amino-acid chain: uncharacterized protein (179 aa).

The protein resides in the virion. This is an uncharacterized protein from Acanthamoeba polyphaga (Amoeba).